Here is a 230-residue protein sequence, read N- to C-terminus: 2,3-bisphosphoglycerate-dependent phosphoglycerate mutase (230 aa).

Residues 8–15 (RHGESEWN), 21–22 (TG), R60, 87–90 (ERHY), K98, 114–115 (RR), and 183–184 (GN) contribute to the substrate site. H9 functions as the Tele-phosphohistidine intermediate in the catalytic mechanism. E87 acts as the Proton donor/acceptor in catalysis.

The protein belongs to the phosphoglycerate mutase family. BPG-dependent PGAM subfamily.

The catalysed reaction is (2R)-2-phosphoglycerate = (2R)-3-phosphoglycerate. Its pathway is carbohydrate degradation; glycolysis; pyruvate from D-glyceraldehyde 3-phosphate: step 3/5. Functionally, catalyzes the interconversion of 2-phosphoglycerate and 3-phosphoglycerate. This chain is 2,3-bisphosphoglycerate-dependent phosphoglycerate mutase, found in Streptococcus pneumoniae (strain ATCC BAA-255 / R6).